We begin with the raw amino-acid sequence, 223 residues long: MSDNAQLTGLSDRFRGFYPVVIDVETAGFNAKTDALLEIAAVTLKMDADGWLTPDETLHFHVEPFEGAILQPEALAFNGIDPHNPLRGAVSEYDALHAIFKMVRKGMKESNCNRAIMVAHNATFDHSFMMAAAERASLKRNPFHPFVTFDTAALSGLALGQTVLAKACIAAGMPFDSTQAHSALYDTEQTALLFCEIVNRWKRLGGWPVPPLAAEDATPQDGE.

Positions 20–194 constitute an Exonuclease domain; the sequence is VVIDVETAGF…YDTEQTALLF (175 aa). The Mg(2+) site is built by Asp23, Glu25, His181, and Asp186. His181 functions as the Proton donor/acceptor in the catalytic mechanism.

This sequence belongs to the RNase T family. Homodimer. Requires Mg(2+) as cofactor.

Its function is as follows. Trims short 3' overhangs of a variety of RNA species, leaving a one or two nucleotide 3' overhang. Responsible for the end-turnover of tRNA: specifically removes the terminal AMP residue from uncharged tRNA (tRNA-C-C-A). Also appears to be involved in tRNA biosynthesis. This Cronobacter sakazakii (strain ATCC BAA-894) (Enterobacter sakazakii) protein is Ribonuclease T.